A 386-amino-acid polypeptide reads, in one-letter code: Pepsin A (386 aa).

An N-terminal signal peptide occupies residues 1–15 (MKWLLLLSLVALSEC). A propeptide spans 16-60 (YIYKVPLVKKKSLRKNLMEQGLLQDYLKTHSINPASKYLKEAASM) (activation peptide). In terms of domain architecture, Peptidase A1 spans 74–383 (YFGTIGIGTP…DRGNNQVGLA (310 aa)). Residue D92 is part of the active site. 2 disulfide bridges follow: C105/C110 and C266/C270. The active site involves D275. Cysteines 309 and 342 form a disulfide.

It belongs to the peptidase A1 family.

The protein resides in the secreted. The enzyme catalyses Preferential cleavage: hydrophobic, preferably aromatic, residues in P1 and P1' positions. Cleaves 1-Phe-|-Val-2, 4-Gln-|-His-5, 13-Glu-|-Ala-14, 14-Ala-|-Leu-15, 15-Leu-|-Tyr-16, 16-Tyr-|-Leu-17, 23-Gly-|-Phe-24, 24-Phe-|-Phe-25 and 25-Phe-|-Tyr-26 bonds in the B chain of insulin.. Its function is as follows. Shows particularly broad specificity; although bonds involving phenylalanine and leucine are preferred, many others are also cleaved to some extent. This Rhinolophus ferrumequinum (Greater horseshoe bat) protein is Pepsin A (PGA).